The sequence spans 168 residues: Photosystem I assembly protein Ycf3 (168 aa).

TPR repeat units lie at residues 35–68 (AFTYYRDGMSAQSEGNYAEALQNYYEATRPEIDP), 72–105 (SYILYNIGLIHTSNGEHTKALEYYFRALERNPFL), and 120–153 (GEQAIRQGDSEIAEAWSDQAAEYWKQAIALTPGN).

It belongs to the Ycf3 family.

It is found in the plastid. It localises to the chloroplast thylakoid membrane. Its function is as follows. Essential for the assembly of the photosystem I (PSI) complex. May act as a chaperone-like factor to guide the assembly of the PSI subunits. This chain is Photosystem I assembly protein Ycf3, found in Liriodendron tulipifera (Tuliptree).